A 193-amino-acid polypeptide reads, in one-letter code: MRTPNILLASQSPRRRELLALLAIPFTAVRVDTPEQFECAASLEENVRRIAEEKAREARRLYPEESSSSIILSADTVVEHDGLILQKPQGEEEALAMLQSLQGRTHSVHTGYALLYGERKHTAMATTRVTFNAMPKREIMRYIATGSPFDKAGAYGIQDPVMASYVSGIEGCYYNVVGLPLSAVWAAIQKMVV.

D75 serves as the catalytic Proton acceptor.

Belongs to the Maf family. YhdE subfamily. It depends on a divalent metal cation as a cofactor.

The protein localises to the cytoplasm. The enzyme catalyses dTTP + H2O = dTMP + diphosphate + H(+). The catalysed reaction is UTP + H2O = UMP + diphosphate + H(+). Nucleoside triphosphate pyrophosphatase that hydrolyzes dTTP and UTP. May have a dual role in cell division arrest and in preventing the incorporation of modified nucleotides into cellular nucleic acids. This is dTTP/UTP pyrophosphatase from Chlorobium luteolum (strain DSM 273 / BCRC 81028 / 2530) (Pelodictyon luteolum).